We begin with the raw amino-acid sequence, 64 residues long: Large ribosomal subunit protein uL29 (64 aa).

This sequence belongs to the universal ribosomal protein uL29 family.

The polypeptide is Large ribosomal subunit protein uL29 (Legionella pneumophila (strain Lens)).